The chain runs to 713 residues: Pro-neuregulin-3, membrane-bound isoform (713 aa).

At 1–362 the chain is on the extracellular side; sequence MSEGAAGASP…MESEDVYQRQ (362 aa). 3 disordered regions span residues 28–48, 119–220, and 251–282; these read AAAAAAAGGGPDGGGEGAAEP, SSFP…STQA, and AAASSSSPSSTSSTTTTPETSTSPKFHTTTYS. Residues 34–44 show a composition bias toward gly residues; the sequence is AGGGPDGGGEG. Residues 127–148 show a composition bias toward low complexity; that stretch reads TTTTTTSTTSPATPSAGGAASS. Over residues 149-163 the composition is skewed to polar residues; that stretch reads RTPNRISTRLTTITR. Low complexity-rich tracts occupy residues 195-207 and 254-274; these read STTAPFFSSSTPG and SSSSPSSTSSTTTTPETSTSP. In terms of domain architecture, EGF-like spans 288-331; that stretch reads HFKPCRDKDLAYCLNDGECFVIETLTGSHKHCRCKEGYQGVRCD. 3 cysteine pairs are disulfide-bonded: Cys292-Cys306, Cys300-Cys319, and Cys321-Cys330. Residues 363–383 form a helical membrane-spanning segment; that stretch reads VLSISCIIFGIVIVGMFCAAF. Residues 384 to 713 lie on the Cytoplasmic side of the membrane; it reads YFKSKKQAKQ…EIQRDSVLTK (330 aa). Positions 449-496 are disordered; sequence SAPQSFPEVTSPDRGSQPIKHHSPGQRSGMLHRNTFRRAPPSPRSRLG.

Belongs to the neuregulin family. Interacts with ERBB4. Post-translationally, proteolytic cleavage close to the plasma membrane on the external face leads to the release of the soluble growth factor form. Extensive glycosylation precedes the proteolytic cleavage. Expressed in sympathetic, motor, and sensory neurons.

Its subcellular location is the cell membrane. The protein localises to the secreted. Its function is as follows. Direct ligand for the ERBB4 tyrosine kinase receptor. Binding results in ligand-stimulated tyrosine phosphorylation and activation of the receptor. Does not bind to the EGF receptor, ERBB2 or ERBB3 receptors. This is Pro-neuregulin-3, membrane-bound isoform (Nrg3) from Mus musculus (Mouse).